Here is a 273-residue protein sequence, read N- to C-terminus: MSAAPRIGILGAGGRMGRTLIQAVQQAGYQLAAAVERPESSLVGTDAGELAGIGSVGVKVSGSLADVLKDCDVIIDFTAPAATAQHLKLCREAGVAMVIGTTGMSDEQKAELDEAATHTPVVYAANYSVGVNVSIKLLELAAKVFGDTVDIEVIEAHHRHKVDAPSGTALMMGEAIADTLGRNLKEVAVYGREGHTGPRDRQTIGFETIRGGDIVGEHTVMFIGEGERVEVTHKATNRMNFAAGAVRAAAWVVGREARKYDMKDVLGLNDVQV.

Residues 11-16 and E36 contribute to the NAD(+) site; that span reads GAGGRM. R37 is an NADP(+) binding site. NAD(+) contacts are provided by residues 100 to 102 and 124 to 127; these read GTT and AANY. Catalysis depends on H157, which acts as the Proton donor/acceptor. Position 158 (H158) interacts with (S)-2,3,4,5-tetrahydrodipicolinate. K161 serves as the catalytic Proton donor. 167–168 is a binding site for (S)-2,3,4,5-tetrahydrodipicolinate; sequence GT.

This sequence belongs to the DapB family.

Its subcellular location is the cytoplasm. The enzyme catalyses (S)-2,3,4,5-tetrahydrodipicolinate + NAD(+) + H2O = (2S,4S)-4-hydroxy-2,3,4,5-tetrahydrodipicolinate + NADH + H(+). It catalyses the reaction (S)-2,3,4,5-tetrahydrodipicolinate + NADP(+) + H2O = (2S,4S)-4-hydroxy-2,3,4,5-tetrahydrodipicolinate + NADPH + H(+). Its pathway is amino-acid biosynthesis; L-lysine biosynthesis via DAP pathway; (S)-tetrahydrodipicolinate from L-aspartate: step 4/4. Its function is as follows. Catalyzes the conversion of 4-hydroxy-tetrahydrodipicolinate (HTPA) to tetrahydrodipicolinate. This chain is 4-hydroxy-tetrahydrodipicolinate reductase, found in Acinetobacter baumannii (strain ACICU).